The sequence spans 325 residues: FLSCSGKSGLESGIPKVSLVIDGTFDDKSFNESALNGVKKLKEEFEIELVLKESSTNSYLSDLEGLKDAGSNLIWLIGYKFSDVAKAVSLQNSEMKYAIIDPVYSNEPIPANLVGMTFRAQEGAFLTGYIAAKVSKTGKIGFLGGIEGDIVDAFRYGYEAGAKYANKDIKIFSQYIGSFSDLEAGRSVATKMYSDGIDIIHHAAGLGGIGAIEVAKELGSGHYIIGVDEDQSYLAPNNVITSTTKDVGRSLNLLTSNYLKTNTFEGGKLINYGLKEGVVGFVRNPKMIPFEVEKEIDSLSSKIINKEVIVPYNKESYEKFLKEFI.

Residues 1-3 form the signal peptide; it reads FLS. Residue C4 is the site of N-palmitoyl cysteine attachment. Residue C4 is the site of S-diacylglycerol cysteine attachment.

Belongs to the BMP lipoprotein family. As to quaternary structure, monomer.

The protein resides in the cell inner membrane. Immunogenic protein. May be part of an ABC-type nucleoside uptake system involved in the purine salvage pathway. The chain is Basic membrane protein A (bmpA) from Borreliella afzelii (Borrelia afzelii).